A 190-amino-acid polypeptide reads, in one-letter code: MRLARELLGGTLVRVTPDGHRLSGRVVEVEAYDCPRDPACTAGRFHAARSAEMAIAPGHWLFWFAHGHPLLQVACRQEGVSASVLIRALEPLEGAGKMLDYRPVTRQRDLTSGPAKLVYALGLDPMQISHRPVNSPELHLLAPETPLADDEVTVTARVGIREGRNLPWRFLIRGNGWVSPAQPSMELAAP.

Belongs to the DNA glycosylase MPG family.

The sequence is that of Putative 3-methyladenine DNA glycosylase from Deinococcus radiodurans (strain ATCC 13939 / DSM 20539 / JCM 16871 / CCUG 27074 / LMG 4051 / NBRC 15346 / NCIMB 9279 / VKM B-1422 / R1).